A 299-amino-acid chain; its full sequence is Homoserine O-acetyltransferase (299 aa).

Catalysis depends on cysteine 142, which acts as the Acyl-thioester intermediate. Substrate-binding residues include lysine 163 and serine 192. Residue histidine 235 is the Proton acceptor of the active site. Glutamate 237 is a catalytic residue. Residue arginine 249 participates in substrate binding.

This sequence belongs to the MetA family.

It is found in the cytoplasm. The enzyme catalyses L-homoserine + acetyl-CoA = O-acetyl-L-homoserine + CoA. Its pathway is amino-acid biosynthesis; L-methionine biosynthesis via de novo pathway; O-acetyl-L-homoserine from L-homoserine: step 1/1. Functionally, transfers an acetyl group from acetyl-CoA to L-homoserine, forming acetyl-L-homoserine. The protein is Homoserine O-acetyltransferase of Synechococcus elongatus (strain ATCC 33912 / PCC 7942 / FACHB-805) (Anacystis nidulans R2).